A 433-amino-acid polypeptide reads, in one-letter code: Histidinol dehydrogenase (433 aa).

NAD(+)-binding residues include tyrosine 129, glutamine 191, and asparagine 214. Residues serine 237, glutamine 259, and histidine 262 each coordinate substrate. Zn(2+) contacts are provided by glutamine 259 and histidine 262. Catalysis depends on proton acceptor residues glutamate 326 and histidine 327. Positions 327, 360, 414, and 419 each coordinate substrate. Aspartate 360 contributes to the Zn(2+) binding site. A Zn(2+)-binding site is contributed by histidine 419.

Belongs to the histidinol dehydrogenase family. Zn(2+) is required as a cofactor.

The catalysed reaction is L-histidinol + 2 NAD(+) + H2O = L-histidine + 2 NADH + 3 H(+). It functions in the pathway amino-acid biosynthesis; L-histidine biosynthesis; L-histidine from 5-phospho-alpha-D-ribose 1-diphosphate: step 9/9. Catalyzes the sequential NAD-dependent oxidations of L-histidinol to L-histidinaldehyde and then to L-histidine. The protein is Histidinol dehydrogenase of Methanosarcina barkeri (strain Fusaro / DSM 804).